Here is a 473-residue protein sequence, read N- to C-terminus: Ammonium transporter Rh type C (473 aa).

Residues 1 to 9 (MLRNSNMRW) lie on the Cytoplasmic side of the membrane. Residues 10-30 (RLPLICFVWEIAMIVLFGIFV) form a helical membrane-spanning segment. The Extracellular portion of the chain corresponds to 31 to 61 (RYNDEADPHWPIFMKHENITSDIENDFYFRY). Asn48 carries an N-linked (GlcNAc...) asparagine glycan. A helical membrane pass occupies residues 62–82 (PSFQDVHVMIFVGFGFLMTFL). At 83–86 (QRYG) the chain is on the cytoplasmic side. Residues 87–107 (FGSVAFNFLLAAFGIQWALLM) traverse the membrane as a helical segment. Over 108 to 125 (QGWFHTFVNGKILIGVES) the chain is Extracellular. The helical transmembrane segment at 126-145 (LINADFCVGSVCIAFGGVLG) threads the bilayer. Over 146–151 (KVSPVQ) the chain is Cytoplasmic. The chain crosses the membrane as a helical span at residues 152 to 171 (IMLMTLFQVTLFAVNEWILL). Over 172–179 (NKLHVIDA) the chain is Extracellular. The chain crosses the membrane as a helical span at residues 180–200 (GGSMTIHTFGAYFGLTVAWIL). Residues 201-219 (SRPKLKQNNDKEGSTYISD) are Cytoplasmic-facing. Residues 220 to 240 (LFSMIGTLFLWMYWPSFNSAI) traverse the membrane as a helical segment. The Extracellular segment spans residues 241-251 (SYHGDAQHRAA). The helical transmembrane segment at 252 to 272 (INTYCSLAACVLTTVAISSVV) threads the bilayer. Over 273–285 (NKKGKLEMVHIQN) the chain is Cytoplasmic. The chain crosses the membrane as a helical span at residues 286–306 (ATLAGGVAVGTAAEMMLTPYG). Residue Ser307 is a topological domain, extracellular. Residues 308-328 (LIVGFICGIVSTLGFTYLSPI) form a helical membrane-spanning segment. Over 329–343 (LSNKLRLHDTCGIHN) the chain is Cytoplasmic. The chain crosses the membrane as a helical span at residues 344–364 (LHAIPGLIGGIVGAVTAACAT). The Extracellular segment spans residues 365–396 (EGVYTAEGLKKMFHFEGEYADRTPSIQGIYQA). Residues 397–417 (AGIGVSLAFGIVGGTVVGCIL) traverse the membrane as a helical segment. Residues 418–473 (KLPIWGDPSDENCFDDDVYWELREEDEEEHLGAANQYITHLPENFKLPDRTEISFK) are Cytoplasmic-facing.

Belongs to the ammonium transporter (TC 2.A.49) family. Rh subfamily. As to quaternary structure, homotrimer.

It localises to the apical cell membrane. Its function is as follows. Functions as an ammonia transporter. The chain is Ammonium transporter Rh type C (rhcg) from Xenopus laevis (African clawed frog).